A 161-amino-acid polypeptide reads, in one-letter code: ATP synthase subunit b (161 aa).

Residues 11-31 (AISFVLFVWFCMKYIWPPIIL) form a helical membrane-spanning segment.

Belongs to the ATPase B chain family. In terms of assembly, F-type ATPases have 2 components, F(1) - the catalytic core - and F(0) - the membrane proton channel. F(1) has five subunits: alpha(3), beta(3), gamma(1), delta(1), epsilon(1). F(0) has three main subunits: a(1), b(2) and c(10-14). The alpha and beta chains form an alternating ring which encloses part of the gamma chain. F(1) is attached to F(0) by a central stalk formed by the gamma and epsilon chains, while a peripheral stalk is formed by the delta and b chains.

The protein localises to the cell membrane. F(1)F(0) ATP synthase produces ATP from ADP in the presence of a proton or sodium gradient. F-type ATPases consist of two structural domains, F(1) containing the extramembraneous catalytic core and F(0) containing the membrane proton channel, linked together by a central stalk and a peripheral stalk. During catalysis, ATP synthesis in the catalytic domain of F(1) is coupled via a rotary mechanism of the central stalk subunits to proton translocation. Functionally, component of the F(0) channel, it forms part of the peripheral stalk, linking F(1) to F(0). The polypeptide is ATP synthase subunit b (Buchnera aphidicola subsp. Acyrthosiphon pisum (strain APS) (Acyrthosiphon pisum symbiotic bacterium)).